The sequence spans 255 residues: Hydroxyacylglutathione hydrolase (255 aa).

Positions 55, 57, 59, 60, 112, 129, and 167 each coordinate Zn(2+).

Belongs to the metallo-beta-lactamase superfamily. Glyoxalase II family. Monomer. The cofactor is Zn(2+).

It carries out the reaction an S-(2-hydroxyacyl)glutathione + H2O = a 2-hydroxy carboxylate + glutathione + H(+). It functions in the pathway secondary metabolite metabolism; methylglyoxal degradation; (R)-lactate from methylglyoxal: step 2/2. Thiolesterase that catalyzes the hydrolysis of S-D-lactoyl-glutathione to form glutathione and D-lactic acid. This is Hydroxyacylglutathione hydrolase from Halorhodospira halophila (strain DSM 244 / SL1) (Ectothiorhodospira halophila (strain DSM 244 / SL1)).